Consider the following 277-residue polypeptide: Protein G1-like2 (277 aa).

Residues M1–E16 are compositionally biased toward gly residues. 3 disordered regions span residues M1–R28, R141–F203, and H225–G245. Positions R19–R28 are enriched in basic and acidic residues. Positions R22–R149 constitute an ALOG domain. The Nuclear localization signal signature appears at K147–K151. Residues P154–A177 are compositionally biased toward low complexity. Pro residues predominate over residues S178–T187.

Belongs to the plant homeotic and developmental regulators ALOG protein family.

The protein localises to the nucleus. Its function is as follows. Probable transcription regulator that acts as a developmental regulator by promoting cell growth in response to light. This chain is Protein G1-like2 (G1L2), found in Oryza sativa subsp. japonica (Rice).